The primary structure comprises 86 residues: Putative membrane protein insertion efficiency factor (86 aa).

The protein belongs to the UPF0161 family.

Its subcellular location is the cell membrane. Its function is as follows. Could be involved in insertion of integral membrane proteins into the membrane. The chain is Putative membrane protein insertion efficiency factor from Streptococcus pyogenes serotype M1.